The following is a 94-amino-acid chain: NADH dehydrogenase [ubiquinone] iron-sulfur protein 3, mitochondrial (94 aa).

The protein belongs to the complex I 30 kDa subunit family. As to quaternary structure, core subunit of respiratory chain NADH dehydrogenase (Complex I) which is composed of 45 different subunits. Interacts with NDUFAF3. Interacts with RAB5IF. Found in subcomplexes containing subunits NDUFS2, MT-ND1 and NDUFA13.

The protein localises to the mitochondrion inner membrane. The catalysed reaction is a ubiquinone + NADH + 5 H(+)(in) = a ubiquinol + NAD(+) + 4 H(+)(out). Core subunit of the mitochondrial membrane respiratory chain NADH dehydrogenase (Complex I) which catalyzes electron transfer from NADH through the respiratory chain, using ubiquinone as an electron acceptor. Essential for the catalytic activity and assembly of complex I. This chain is NADH dehydrogenase [ubiquinone] iron-sulfur protein 3, mitochondrial, found in Mesocricetus auratus (Golden hamster).